We begin with the raw amino-acid sequence, 185 residues long: uncharacterized protein (185 aa).

The N-terminal stretch at 1–29 (MKNQEIIEVKSKMFLRIWAFVGSAGMGLA) is a signal peptide. The N-palmitoyl cysteine moiety is linked to residue cysteine 30. A lipid anchor (S-diacylglycerol cysteine) is attached at cysteine 30. A helical transmembrane segment spans residues 45 to 67 (YLLAIPAGFLFTLFCLYLFIIFF).

This sequence to B.subtilis YfjE.

It is found in the cell membrane. This is an uncharacterized protein from Bacillus subtilis (strain 168).